A 448-amino-acid polypeptide reads, in one-letter code: High mobility group B protein 15 (448 aa).

In terms of domain architecture, ARID spans 29–120 (VADPRLFMTS…LLNNYEQIYF (92 aa)). The span at 219–236 (PQQSHGVLPNTLNISANP) shows a compositional bias: polar residues. Disordered stretches follow at residues 219–270 (PQQS…RSGY), 333–352 (KKNG…LPEQ), and 366–448 (VEED…AEQN). Positions 244-255 (TKRRRRRKKSEI) are enriched in basic residues. A DNA-binding region (HMG box) is located at residues 263 to 330 (PKPNRSGYNF…RYRTEMEDYR (68 aa)). Residues 389 to 398 (SIETDPELEE) are compositionally biased toward acidic residues. Low complexity predominate over residues 399 to 412 (PSLNPSGPNLNPNP).

Belongs to the HMGB family.

It is found in the nucleus. Functionally, binds preferentially DNA with A/T-rich content. The sequence is that of High mobility group B protein 15 (HMGB15) from Arabidopsis thaliana (Mouse-ear cress).